The following is a 1093-amino-acid chain: Small G protein signaling modulator 1 (1093 aa).

Positions 36–190 constitute an RUN domain; sequence HEDSSHIISF…EYTKMKTADH (155 aa). Positions 256–297 are important for interaction with RAB9A and RAB9B; that stretch reads LLYGKNNVLVQPRDDMEAVPGYLSLHQTADVMTLKWTPNQLM. Residues 301–350 are required for interaction with RAP family members; it reads VGDLDYEKSVYWDYAVTIRLEEIVYLHCHQQVDSGGTVVLVSQDGIQRPP. Disordered stretches follow at residues 377–412, 645–778, and 810–838; these read DPPL…KEDD, DSTI…ELAV, and DGAV…EEPE. Over residues 385–397 the composition is skewed to basic residues; it reads GKGKVFPKLRKRS. A Rab-GAP TBC domain is found at 562-1026; the sequence is GVQPEIRRAV…SVWETIWAAK (465 aa). Polar residues predominate over residues 647 to 676; the sequence is TISNESSQSCSSGRQNLRLQSDSSSSTQVF. The span at 687–696 shows a compositional bias: basic and acidic residues; sequence AEGRSEEKHP. A compositionally biased stretch (polar residues) spans 702-736; sequence NPANGTCSPDSGHPSSHNFSSGLSEHSEPSLSTED. Composition is skewed to basic and acidic residues over residues 766-776 and 820-829; these read TSRDEAPREEL and EADKPSRADS.

This sequence belongs to the RUTBC family. As to quaternary structure, interacts with RAB9A (GTP-bound form) and RAB9B. Interacts with RAB3A, RAB4A, RAB5A, RAB8A, RAB11A, RAP1A, RAP1B, RAP2A and RAP2B. No interaction with RAB27A. Expressed only in brain.

It localises to the golgi apparatus. It is found in the trans-Golgi network. Its subcellular location is the cytoplasm. The protein localises to the cytoplasmic vesicle membrane. Functionally, interacts with numerous Rab family members, functioning as Rab effector for some, and as GTPase activator for others. Promotes GTP hydrolysis by RAB34 and RAB36. Probably functions as a GTPase effector with RAB9A and RAB9B; does not stimulate GTP hydrolysis with RAB9A and RAB9B. The protein is Small G protein signaling modulator 1 (Sgsm1) of Mus musculus (Mouse).